The sequence spans 1071 residues: ATP-dependent helicase/deoxyribonuclease subunit B (1071 aa).

This sequence belongs to the helicase family. AddB/RexB type 2 subfamily. Heterodimer of AddA and RexB. Mg(2+) serves as cofactor.

In terms of biological role, the heterodimer acts as both an ATP-dependent DNA helicase and an ATP-dependent, dual-direction single-stranded exonuclease. Recognizes the chi site generating a DNA molecule suitable for the initiation of homologous recombination. This subunit has 5' -&gt; 3' nuclease activity but not helicase activity. The chain is ATP-dependent helicase/deoxyribonuclease subunit B from Streptococcus pyogenes serotype M28 (strain MGAS6180).